The primary structure comprises 122 residues: Small ribosomal subunit protein uS13 (122 aa).

A disordered region spans residues 97–122; it reads PVRGQRTRTNARTRKGPRKTVAKKKK. Over residues 101 to 122 the composition is skewed to basic residues; that stretch reads QRTRTNARTRKGPRKTVAKKKK.

The protein belongs to the universal ribosomal protein uS13 family. Part of the 30S ribosomal subunit. Forms a loose heterodimer with protein S19. Forms two bridges to the 50S subunit in the 70S ribosome.

Functionally, located at the top of the head of the 30S subunit, it contacts several helices of the 16S rRNA. In the 70S ribosome it contacts the 23S rRNA (bridge B1a) and protein L5 of the 50S subunit (bridge B1b), connecting the 2 subunits; these bridges are implicated in subunit movement. Contacts the tRNAs in the A and P-sites. The polypeptide is Small ribosomal subunit protein uS13 (Caldanaerobacter subterraneus subsp. tengcongensis (strain DSM 15242 / JCM 11007 / NBRC 100824 / MB4) (Thermoanaerobacter tengcongensis)).